Consider the following 75-residue polypeptide: uncharacterized protein (75 aa).

The chain crosses the membrane as a helical span at residues 4 to 26 (PSLLFLGFSGVLAFGEVGWVGVY).

Its subcellular location is the membrane. This is an uncharacterized protein from Treponema pallidum (strain Nichols).